Here is a 304-residue protein sequence, read N- to C-terminus: D-alanine--D-alanine ligase (304 aa).

Positions 103–299 (KLIWQALGLP…FADLCIEILK (197 aa)) constitute an ATP-grasp domain. An ATP-binding site is contributed by 129–184 (EEKLGLPMFVKPAAEGSSVGVVKVKGKGRLKSVYEELKHLQGEIIAERFIGGGEYS). Mg(2+) contacts are provided by Asp253, Glu266, and Asn268.

It belongs to the D-alanine--D-alanine ligase family. Mg(2+) is required as a cofactor. The cofactor is Mn(2+).

The protein resides in the cytoplasm. The enzyme catalyses 2 D-alanine + ATP = D-alanyl-D-alanine + ADP + phosphate + H(+). The protein operates within cell wall biogenesis; peptidoglycan biosynthesis. In terms of biological role, cell wall formation. This is D-alanine--D-alanine ligase from Neisseria meningitidis serogroup C / serotype 2a (strain ATCC 700532 / DSM 15464 / FAM18).